The chain runs to 502 residues: ATP synthase subunit alpha (502 aa).

169–176 (GDRQTGKT) lines the ATP pocket.

This sequence belongs to the ATPase alpha/beta chains family. As to quaternary structure, F-type ATPases have 2 components, CF(1) - the catalytic core - and CF(0) - the membrane proton channel. CF(1) has five subunits: alpha(3), beta(3), gamma(1), delta(1), epsilon(1). CF(0) has three main subunits: a(1), b(2) and c(9-12). The alpha and beta chains form an alternating ring which encloses part of the gamma chain. CF(1) is attached to CF(0) by a central stalk formed by the gamma and epsilon chains, while a peripheral stalk is formed by the delta and b chains.

It is found in the cell inner membrane. It carries out the reaction ATP + H2O + 4 H(+)(in) = ADP + phosphate + 5 H(+)(out). Produces ATP from ADP in the presence of a proton gradient across the membrane. The alpha chain is a regulatory subunit. The chain is ATP synthase subunit alpha from Geotalea uraniireducens (strain Rf4) (Geobacter uraniireducens).